A 702-amino-acid chain; its full sequence is Polyribonucleotide nucleotidyltransferase (702 aa).

Residues Asp485 and Asp491 each contribute to the Mg(2+) site. Positions 552-612 constitute a KH domain; the sequence is PRTEIICIDP…EGVKKAISII (61 aa). An S1 motif domain is found at 622–690; that stretch reads GEIYLGKVTK…NQGRINLSRK (69 aa).

This sequence belongs to the polyribonucleotide nucleotidyltransferase family. Mg(2+) serves as cofactor.

The protein resides in the cytoplasm. It carries out the reaction RNA(n+1) + phosphate = RNA(n) + a ribonucleoside 5'-diphosphate. Involved in mRNA degradation. Catalyzes the phosphorolysis of single-stranded polyribonucleotides processively in the 3'- to 5'-direction. The polypeptide is Polyribonucleotide nucleotidyltransferase (Clostridium botulinum (strain Langeland / NCTC 10281 / Type F)).